We begin with the raw amino-acid sequence, 141 residues long: Large ribosomal subunit protein uL11 (141 aa).

This sequence belongs to the universal ribosomal protein uL11 family. In terms of assembly, part of the ribosomal stalk of the 50S ribosomal subunit. Interacts with L10 and the large rRNA to form the base of the stalk. L10 forms an elongated spine to which L12 dimers bind in a sequential fashion forming a multimeric L10(L12)X complex. Post-translationally, one or more lysine residues are methylated.

In terms of biological role, forms part of the ribosomal stalk which helps the ribosome interact with GTP-bound translation factors. This chain is Large ribosomal subunit protein uL11, found in Lactococcus lactis subsp. lactis (strain IL1403) (Streptococcus lactis).